The following is a 204-amino-acid chain: Large ribosomal subunit protein uL4 (204 aa).

The disordered stretch occupies residues 49 to 75; the sequence is TKGRSDVSGGGKKPWRQKGRGGARAGS.

Belongs to the universal ribosomal protein uL4 family. As to quaternary structure, part of the 50S ribosomal subunit.

Its function is as follows. One of the primary rRNA binding proteins, this protein initially binds near the 5'-end of the 23S rRNA. It is important during the early stages of 50S assembly. It makes multiple contacts with different domains of the 23S rRNA in the assembled 50S subunit and ribosome. In terms of biological role, forms part of the polypeptide exit tunnel. In Campylobacter jejuni subsp. doylei (strain ATCC BAA-1458 / RM4099 / 269.97), this protein is Large ribosomal subunit protein uL4.